The primary structure comprises 475 residues: Ribulose bisphosphate carboxylase large chain (475 aa).

Residues 1–2 (MS) constitute a propeptide that is removed on maturation. Position 3 is an N-acetylproline (Pro-3). Lys-14 bears the N6,N6,N6-trimethyllysine mark. The substrate site is built by Asn-123 and Thr-173. Lys-175 acts as the Proton acceptor in catalysis. Lys-177 lines the substrate pocket. Residues Lys-201, Asp-203, and Glu-204 each contribute to the Mg(2+) site. The residue at position 201 (Lys-201) is an N6-carboxylysine. The active-site Proton acceptor is His-294. The substrate site is built by Arg-295, His-327, and Ser-379.

This sequence belongs to the RuBisCO large chain family. Type I subfamily. As to quaternary structure, heterohexadecamer of 8 large chains and 8 small chains; disulfide-linked. The disulfide link is formed within the large subunit homodimers. Mg(2+) serves as cofactor. Post-translationally, the disulfide bond which can form in the large chain dimeric partners within the hexadecamer appears to be associated with oxidative stress and protein turnover.

Its subcellular location is the plastid. The protein resides in the chloroplast. It carries out the reaction 2 (2R)-3-phosphoglycerate + 2 H(+) = D-ribulose 1,5-bisphosphate + CO2 + H2O. The catalysed reaction is D-ribulose 1,5-bisphosphate + O2 = 2-phosphoglycolate + (2R)-3-phosphoglycerate + 2 H(+). Functionally, ruBisCO catalyzes two reactions: the carboxylation of D-ribulose 1,5-bisphosphate, the primary event in carbon dioxide fixation, as well as the oxidative fragmentation of the pentose substrate in the photorespiration process. Both reactions occur simultaneously and in competition at the same active site. The polypeptide is Ribulose bisphosphate carboxylase large chain (Pinus koraiensis (Korean pine)).